The primary structure comprises 59 residues: Large ribosomal subunit protein bL32 (59 aa).

Residues 1–59 (MAVQQNRKTPSKRGMRRSHDALSGPALSVEPQTGETHRRHHVSPDGYYRGRKVMQGRED) are disordered. Basic residues predominate over residues 49-59 (RGRKVMQGRED).

It belongs to the bacterial ribosomal protein bL32 family.

The protein is Large ribosomal subunit protein bL32 of Alkalilimnicola ehrlichii (strain ATCC BAA-1101 / DSM 17681 / MLHE-1).